A 130-amino-acid chain; its full sequence is Small ribosomal subunit protein uS8 (130 aa).

This sequence belongs to the universal ribosomal protein uS8 family. As to quaternary structure, part of the 30S ribosomal subunit. Contacts proteins S5 and S12.

Its function is as follows. One of the primary rRNA binding proteins, it binds directly to 16S rRNA central domain where it helps coordinate assembly of the platform of the 30S subunit. The protein is Small ribosomal subunit protein uS8 of Aeromonas hydrophila subsp. hydrophila (strain ATCC 7966 / DSM 30187 / BCRC 13018 / CCUG 14551 / JCM 1027 / KCTC 2358 / NCIMB 9240 / NCTC 8049).